A 334-amino-acid chain; its full sequence is L-lactate dehydrogenase B-A chain (334 aa).

Residues 30–58 (GQVG…VEDR) and arginine 100 each bind NAD(+). Positions 107, 139, and 170 each coordinate substrate. Asparagine 139 provides a ligand contact to NAD(+). Histidine 194 acts as the Proton acceptor in catalysis. Threonine 249 is a substrate binding site.

Belongs to the LDH/MDH superfamily. LDH family. In terms of assembly, homotetramer.

Its subcellular location is the cytoplasm. It carries out the reaction (S)-lactate + NAD(+) = pyruvate + NADH + H(+). It functions in the pathway fermentation; pyruvate fermentation to lactate; (S)-lactate from pyruvate: step 1/1. The chain is L-lactate dehydrogenase B-A chain (ldhba) from Danio rerio (Zebrafish).